We begin with the raw amino-acid sequence, 1330 residues long: Pre-mRNA-splicing factor CWC22 homolog (1330 aa).

The segment at 1-377 is disordered; that stretch reads MGESDAESDS…AAKITERQRK (377 aa). Over residues 9-36 the composition is skewed to low complexity; it reads DSSSNSSSSDTSSGSDSDARSESSSSES. A compositionally biased stretch (basic and acidic residues) spans 46–94; it reads QEESAKDAKKTDDTDRGEKRAKERDAGQDEQPTEQKKTPAAEPRSERQH. Over residues 99-113 the composition is skewed to low complexity; it reads AGVEKQQEEAVAAAE. Basic and acidic residues predominate over residues 115–135; sequence ESEKLNEAKKVETPVQRKEEA. Polar residues predominate over residues 138–148; sequence SSVTKELNSPK. A compositionally biased stretch (basic and acidic residues) spans 149 to 166; that stretch reads AQEENAARELEERRKDEE. The span at 168–177 shows a compositional bias: polar residues; sequence PVTTNGSSKE. Residues threonine 191 and threonine 201 each carry the phosphothreonine modification. Basic and acidic residues-rich tracts occupy residues 191 to 201 and 208 to 236; these read TADHIEEGEIT and LPTK…SPDG. Residues serine 219 and serine 221 each carry the phosphoserine modification. Basic residues predominate over residues 252 to 277; sequence SRRRRRSRSKGSRTRSRSKSPIRRRS. 2 stretches are compositionally biased toward basic and acidic residues: residues 278–307 and 316–325; these read NSLE…EREK and SSRRRDDSRE. The segment covering 355–366 has biased composition (low complexity); it reads TETNADNETVTE. The region spanning 420 to 603 is the MIF4G domain; that stretch reads KKSIHGYINK…EVLFQIRKDG (184 aa). The segment at 660 to 697 is disordered; that stretch reads REILGSDDGSSSGSGSGSDSDSDSDGESGSDAEKKAEA. The span at 665-678 shows a compositional bias: low complexity; the sequence is SDDGSSSGSGSGSD. Acidic residues predominate over residues 679 to 689; it reads SDSDSDGESGS. Positions 710–826 constitute an MI domain; the sequence is ALRRTIYLTI…SWDVLECIQL (117 aa). Residues 926–1330 form a disordered region; the sequence is FRDGSAPAGN…RSSRRSKGRS (405 aa). Over residues 941–951 the composition is skewed to low complexity; the sequence is SSSSSSSSSSD. Acidic residues predominate over residues 952–963; sequence TDSEDSSEEDSS. The segment covering 964–976 has biased composition (low complexity); it reads SDSSSESSSSDSS. Residues 980–1012 are compositionally biased toward basic residues; that stretch reads KKKRKRKDKDKKKSKKATKEKSKKTKNKKKKKK. The span at 1013 to 1033 shows a compositional bias: basic and acidic residues; the sequence is AEKEQEKEKEKQRKSKKEKEK. Positions 1034 to 1054 are enriched in basic residues; that stretch reads DKKRKKEEKKAAKKKSKHRRK. The span at 1072–1082 shows a compositional bias: low complexity; sequence SESSDSSNSSS. Over residues 1089-1110 the composition is skewed to basic and acidic residues; it reads PQAKIKRQEHVEKNKFRGRTQD. Threonine 1108 carries the phosphothreonine modification. Phosphoserine is present on residues serine 1111, serine 1121, serine 1180, and serine 1181. Basic and acidic residues-rich tracts occupy residues 1133–1195 and 1203–1320; these read RRRD…VAHD and SRSY…SRRE. Position 1182 is a phosphotyrosine (tyrosine 1182). Basic residues predominate over residues 1321–1330; sequence RSSRRSKGRS.

It belongs to the CWC22 family. As to quaternary structure, component of the spliceosome C complex. Interacts with eIF4AIII.

It localises to the nucleus speckle. In terms of biological role, required for pre-mRNA splicing and for exon-junction complex (EJC) assembly. Hinders eIF4AIII from non-specifically binding RNA and escorts it to the splicing machinery to promote EJC assembly on mature mRNAs. The sequence is that of Pre-mRNA-splicing factor CWC22 homolog (ncm) from Drosophila melanogaster (Fruit fly).